The following is a 424-amino-acid chain: Glutamate-1-semialdehyde 2,1-aminomutase (424 aa).

An N6-(pyridoxal phosphate)lysine modification is found at Lys-258.

Belongs to the class-III pyridoxal-phosphate-dependent aminotransferase family. HemL subfamily. Requires pyridoxal 5'-phosphate as cofactor.

The protein localises to the cytoplasm. It carries out the reaction (S)-4-amino-5-oxopentanoate = 5-aminolevulinate. It functions in the pathway porphyrin-containing compound metabolism; protoporphyrin-IX biosynthesis; 5-aminolevulinate from L-glutamyl-tRNA(Glu): step 2/2. The polypeptide is Glutamate-1-semialdehyde 2,1-aminomutase (Pyrobaculum islandicum (strain DSM 4184 / JCM 9189 / GEO3)).